A 153-amino-acid chain; its full sequence is Guanyl-specific ribonuclease N1 (153 aa).

An N-terminal signal peptide occupies residues 1-20 (MVQLLSAFVSLLSVVAVSGA). Positions 21 to 49 (AIPAPAPEAVVDVAPETATIEPTGNFTAQ) are excised as a propeptide. 2 cysteine pairs are disulfide-bonded: cysteine 51-cysteine 59 and cysteine 55-cysteine 152. Histidine 89 is a catalytic residue. The Proton acceptor role is filled by glutamate 107. The Proton donor role is filled by histidine 141.

It belongs to the ribonuclease N1/T1 family.

The catalysed reaction is [RNA] containing guanosine + H2O = an [RNA fragment]-3'-guanosine-3'-phosphate + a 5'-hydroxy-ribonucleotide-3'-[RNA fragment].. This is Guanyl-specific ribonuclease N1 (grn) from Neurospora crassa (strain ATCC 24698 / 74-OR23-1A / CBS 708.71 / DSM 1257 / FGSC 987).